The following is a 413-amino-acid chain: Probable N-acetyltransferase HLS1-like (413 aa).

One can recognise an N-acetyltransferase domain in the interval Val5–Asn187.

This sequence belongs to the acetyltransferase family.

The protein is Probable N-acetyltransferase HLS1-like of Arabidopsis thaliana (Mouse-ear cress).